A 196-amino-acid polypeptide reads, in one-letter code: GTP cyclohydrolase 1 (196 aa).

Residues Cys-85, His-88, and Cys-156 each coordinate Zn(2+).

This sequence belongs to the GTP cyclohydrolase I family. As to quaternary structure, toroid-shaped homodecamer, composed of two pentamers of five dimers.

It carries out the reaction GTP + H2O = 7,8-dihydroneopterin 3'-triphosphate + formate + H(+). It participates in cofactor biosynthesis; 7,8-dihydroneopterin triphosphate biosynthesis; 7,8-dihydroneopterin triphosphate from GTP: step 1/1. This Bacteroides thetaiotaomicron (strain ATCC 29148 / DSM 2079 / JCM 5827 / CCUG 10774 / NCTC 10582 / VPI-5482 / E50) protein is GTP cyclohydrolase 1.